A 219-amino-acid chain; its full sequence is Uracil phosphoribosyltransferase 1 (219 aa).

GTP is bound by residues Arg33, Arg42, and 76–79 (DGRI). Residue Arg86 coordinates 5-phospho-alpha-D-ribose 1-diphosphate. Arg103 provides a ligand contact to GTP. 5-phospho-alpha-D-ribose 1-diphosphate is bound at residue Arg111. Arg132 contributes to the GTP binding site. 5-phospho-alpha-D-ribose 1-diphosphate-binding positions include Asp138 and 138-146 (DPMLATGGS). Tyr202 contacts D-ribose 5-phosphate. Uracil is bound by residues Ile203 and 208-210 (GDF). Asp209 contacts 5-phospho-alpha-D-ribose 1-diphosphate.

It belongs to the UPRTase family. Requires Mg(2+) as cofactor.

The enzyme catalyses UMP + diphosphate = 5-phospho-alpha-D-ribose 1-diphosphate + uracil. Its pathway is pyrimidine metabolism; UMP biosynthesis via salvage pathway; UMP from uracil: step 1/1. With respect to regulation, allosterically activated by GTP. Catalyzes the conversion of uracil and 5-phospho-alpha-D-ribose 1-diphosphate (PRPP) to UMP and diphosphate. The chain is Uracil phosphoribosyltransferase 1 from Schizosaccharomyces pombe (strain 972 / ATCC 24843) (Fission yeast).